We begin with the raw amino-acid sequence, 262 residues long: Polyamine aminopropyltransferase (262 aa).

Residues 1–249 form the PABS domain; the sequence is MWITQEITPY…DIHRAAFALP (249 aa). Asn29 lines the S-methyl-5'-thioadenosine pocket. Residue Asp83 participates in spermidine binding. Asp155 functions as the Proton acceptor in the catalytic mechanism.

In terms of assembly, homodimer.

It localises to the cytoplasm. The enzyme catalyses S-adenosyl 3-(methylsulfanyl)propylamine + putrescine = S-methyl-5'-thioadenosine + spermidine + H(+). It functions in the pathway amine and polyamine biosynthesis; spermidine biosynthesis; spermidine from putrescine: step 1/1. Inhibited by methylglyoxal bis(cyclopentylamidinohydrazone)(MGBCP). Involved in the cell growth and proliferation. Catalyzes the irreversible transfer of a propylamine group from the amino donor S-adenosylmethioninamine (decarboxy-AdoMet) to putrescine (1,4-diaminobutane) to yield spermidine. Spermidine cannot be used as an aminopropyl acceptor. The polypeptide is Polyamine aminopropyltransferase (Helicobacter pylori (strain ATCC 700392 / 26695) (Campylobacter pylori)).